The primary structure comprises 434 residues: F-box/kelch-repeat protein At1g55270 (434 aa).

Residues 76–122 (PPLLPGLPDDLAVACLIRVPRAEHRKLRLVCKRWYRLASGNFFYSQR) form the F-box domain. 5 Kelch repeats span residues 129–178 (EEWV…VLSG), 180–227 (HLYL…VINN), 229–276 (LYVA…VYDK), 278–321 (WFLK…SLNG), and 325–371 (GLDC…LHNK).

The polypeptide is F-box/kelch-repeat protein At1g55270 (Arabidopsis thaliana (Mouse-ear cress)).